Consider the following 315-residue polypeptide: Petrobactin import system permease protein YclO (315 aa).

The next 9 membrane-spanning stretches (helical) occupy residues 7-27 (IALLVGLAIVCIGLFLFYDLG), 40-60 (VAAIVLTGGAIAFSTMIFQTI), 76-96 (LYMLIQTGIIFLFGSANMVIM), 100-120 (INFIISVLLMILFSLVLYQIM), 128-148 (IFFLLLIGIVFGTLFSSLSSF), 172-192 (INTDLLWLAFIIFLLTGVYVW), 223-243 (LIVVAILVSVSTALVGPIMFL), 262-282 (YLIAGSVFISIIALVGGQFVV), and 288-308 (FSTTLSVIINFAGGIYFIYLL).

This sequence belongs to the binding-protein-dependent transport system permease family. FecCD subfamily. The complex is composed of two ATP-binding proteins (YclP), two transmembrane proteins (YclN and YclO) and a solute-binding protein (YclQ).

It is found in the cell membrane. In terms of biological role, part of the ABC transporter complex YclNOPQ involved in uptake of ferric-petrobactin. Petrobactin is a photoreactive 3,4-catecholate siderophore produced by many members of the B.cereus group, including B.anthracis. Probably responsible for the translocation of the substrate across the membrane. The protein is Petrobactin import system permease protein YclO (yclO) of Bacillus subtilis (strain 168).